A 378-amino-acid chain; its full sequence is Cytochrome b (378 aa).

The next 4 helical transmembrane spans lie at 34–54, 78–99, 114–134, and 179–199; these read FGSL…FLAM, WFLR…FMHV, WNTG…GYVL, and FFTF…IHLL. Residues H84 and H98 each contribute to the heme b site. 2 residues coordinate heme b: H183 and H197. H202 provides a ligand contact to a ubiquinone. The next 4 helical transmembrane spans lie at 227-247, 289-309, 321-341, and 348-368; these read YKDI…IWKF, LGGV…PFTH, LNQI…WIGA, and YVLT…INPL.

This sequence belongs to the cytochrome b family. As to quaternary structure, the main subunits of complex b-c1 are: cytochrome b, cytochrome c1 and the Rieske protein. It depends on heme b as a cofactor.

The protein localises to the mitochondrion inner membrane. Component of the ubiquinol-cytochrome c reductase complex (complex III or cytochrome b-c1 complex) that is part of the mitochondrial respiratory chain. The b-c1 complex mediates electron transfer from ubiquinol to cytochrome c. Contributes to the generation of a proton gradient across the mitochondrial membrane that is then used for ATP synthesis. This chain is Cytochrome b (MT-CYB), found in Anopheles quadrimaculatus (Common malaria mosquito).